Reading from the N-terminus, the 618-residue chain is UvrABC system protein C (618 aa).

One can recognise a GIY-YIG domain in the interval 13–92 (DKPGVYLMKN…IKKYRPKYNI (80 aa)). Positions 204 to 239 (LDIVENFKLNMEKAAENLEFEKAAMLRDKINIIEKI) constitute a UVR domain.

This sequence belongs to the UvrC family. As to quaternary structure, interacts with UvrB in an incision complex.

The protein resides in the cytoplasm. In terms of biological role, the UvrABC repair system catalyzes the recognition and processing of DNA lesions. UvrC both incises the 5' and 3' sides of the lesion. The N-terminal half is responsible for the 3' incision and the C-terminal half is responsible for the 5' incision. The protein is UvrABC system protein C of Clostridium botulinum (strain Kyoto / Type A2).